The chain runs to 133 residues: Stage III sporulation protein AD (133 aa).

3 helical membrane passes run Q2–V22, F29–I49, and I108–L128.

It localises to the cell membrane. The protein is Stage III sporulation protein AD (spoIIIAD) of Bacillus subtilis (strain 168).